We begin with the raw amino-acid sequence, 97 residues long: Protein GLUTAMINE DUMPER 7 (97 aa).

Residues 1–25 are Extracellular-facing; the sequence is MSLHRDSMVPVNSRLENMDSPILSK. Residues 26 to 46 form a helical membrane-spanning segment; it reads ICAWGVMLGLFALSLFAMAYA. The Cytoplasmic portion of the chain corresponds to 47-97; it reads CYHKQTSNSCIEEKQGKKQVLKPLDMEPKIVVIMAGNENPTFFAKPTQINA. The VIMAG motif lies at 78–82; it reads VIMAG.

This sequence belongs to the GLUTAMINE DUMPER 1 (TC 9.B.60) family. In terms of tissue distribution, expressed in the vascular tissues, even in the minor veins of the leaves.

Its subcellular location is the membrane. Probable subunit of an amino acid transporter involved in the regulation of the amino acid metabolism. Stimulates amino acid export by activating nonselective amino acid facilitators. This is Protein GLUTAMINE DUMPER 7 (GDU7) from Arabidopsis thaliana (Mouse-ear cress).